We begin with the raw amino-acid sequence, 118 residues long: Na(+)/H(+) antiporter subunit G1 (118 aa).

A run of 3 helical transmembrane segments spans residues 9–29 (IALI…IGIL), 41–61 (AGKA…LFFI), and 70–90 (QLIV…HLII).

The protein belongs to the CPA3 antiporters (TC 2.A.63) subunit G family. As to quaternary structure, may form a heterooligomeric complex that consists of seven subunits: mnhA1, mnhB1, mnhC1, mnhD1, mnhE1, mnhF1 and mnhG1.

It localises to the cell membrane. Mnh complex is a Na(+)/H(+) antiporter involved in Na(+) excretion. The protein is Na(+)/H(+) antiporter subunit G1 (mnhG1) of Staphylococcus saprophyticus subsp. saprophyticus (strain ATCC 15305 / DSM 20229 / NCIMB 8711 / NCTC 7292 / S-41).